A 150-amino-acid polypeptide reads, in one-letter code: MKVQVKILDQRLGQEWPLPSYATTGSAGLDLRACLDEAIQIEPGQTVLIKTGMAIYIHDTNFAGLILPRSGLGHKHGIVLGNLVGLIDSDYQGELMISVWNRGQNTFTLEPGERLAQYVLVPVIQAEFEQVEEFVATDRGAGGFGHTGQK.

Substrate is bound by residues 69 to 71, Asn-82, 86 to 88, and Met-96; these read RSG and LID.

It belongs to the dUTPase family. It depends on Mg(2+) as a cofactor.

The catalysed reaction is dUTP + H2O = dUMP + diphosphate + H(+). It participates in pyrimidine metabolism; dUMP biosynthesis; dUMP from dCTP (dUTP route): step 2/2. Functionally, this enzyme is involved in nucleotide metabolism: it produces dUMP, the immediate precursor of thymidine nucleotides and it decreases the intracellular concentration of dUTP so that uracil cannot be incorporated into DNA. The sequence is that of Deoxyuridine 5'-triphosphate nucleotidohydrolase from Acinetobacter baylyi (strain ATCC 33305 / BD413 / ADP1).